Consider the following 447-residue polypeptide: Glutamate--tRNA ligase 2 (447 aa).

A 'HIGH' region motif is present at residues 9–19 (PSPTGYLHIGN). Positions 240–244 (GLSKR) match the 'KMSKS' region motif. K243 contributes to the ATP binding site.

The protein belongs to the class-I aminoacyl-tRNA synthetase family. Glutamate--tRNA ligase type 1 subfamily. As to quaternary structure, monomer.

It is found in the cytoplasm. It catalyses the reaction tRNA(Glu) + L-glutamate + ATP = L-glutamyl-tRNA(Glu) + AMP + diphosphate. Catalyzes the attachment of glutamate to tRNA(Glu) in a two-step reaction: glutamate is first activated by ATP to form Glu-AMP and then transferred to the acceptor end of tRNA(Glu). This is Glutamate--tRNA ligase 2 from Methylobacterium sp. (strain 4-46).